Reading from the N-terminus, the 246-residue chain is Envelope glycoprotein L (246 aa).

Residues 1-19 (MKTNIFFIFLISILNQIYA) form the signal peptide. The region spanning 29-235 (LEQECIKNIL…EKYNEVLPFR (207 aa)) is the gL betaherpesvirus-type domain. Residues cysteine 134 and cysteine 139 are joined by a disulfide bond.

This sequence belongs to the herpesviridae glycoprotein L (gL) family. Betaherpesvirinae gL subfamily. As to quaternary structure, interacts with glycoprotein H (gH); this interaction is necessary for the correct processing and cell surface expression of gH.

It is found in the virion membrane. The protein localises to the host cell membrane. The protein resides in the host Golgi apparatus. It localises to the host trans-Golgi network. Functionally, the heterodimer glycoprotein H-glycoprotein L is required for the fusion of viral and plasma membranes leading to virus entry into the host cell. Acts as a functional inhibitor of gH and maintains gH in an inhibited form. Upon binding to host integrins, gL dissociates from gH leading to activation of the viral fusion glycoproteins gB and gH. This is Envelope glycoprotein L from Homo sapiens (Human).